We begin with the raw amino-acid sequence, 599 residues long: Stromal 70 kDa heat shock-related protein, chloroplastic (599 aa).

Residues 545 to 573 (NQPGAGGEPGAAQAQHQEQSSARQIQRAK) form a disordered region. A compositionally biased stretch (low complexity) spans 554 to 568 (GAAQAQHQEQSSARQ).

It belongs to the heat shock protein 70 family.

The protein localises to the plastid. It is found in the chloroplast stroma. Functionally, interacts with newly imported chloroplast proteins to assist in their maturation. The protein is Stromal 70 kDa heat shock-related protein, chloroplastic (CHSP70) of Spinacia oleracea (Spinach).